The primary structure comprises 329 residues: Ribosome biogenesis regulatory protein homolog (329 aa).

2 disordered regions span residues Lys227–Glu248 and Lys262–Lys329. Basic and acidic residues predominate over residues Leu278–Arg295. Residues Ala320 to Lys329 are compositionally biased toward basic residues.

This sequence belongs to the RRS1 family.

The protein resides in the nucleus. Its subcellular location is the nucleolus. Involved in ribosomal large subunit assembly. In Caenorhabditis briggsae, this protein is Ribosome biogenesis regulatory protein homolog.